The primary structure comprises 394 residues: Magnesium transporter MRS2-2 (394 aa).

The interval 115-145 is disordered; sequence PVGNASHNGGQGDGKEIAGAQNDGDTGDEDE. Transmembrane regions (helical) follow at residues 329-349 and 366-386; these read LVLS…GIFG and YVVG…MSYA. Positions 349-351 match the Required for magnesium transport activity motif; that stretch reads GMN.

This sequence belongs to the CorA metal ion transporter (MIT) (TC 1.A.35.5) family. Expressed in the whole plant but preferentially in the mature anthers.

Its subcellular location is the membrane. In terms of biological role, low-affinity magnesium transporter that mediates the influx of magnesium. Plays a crucial role in male gametophyte development and male fertility. This Arabidopsis thaliana (Mouse-ear cress) protein is Magnesium transporter MRS2-2 (MRS2-2).